The sequence spans 312 residues: R2-like ligand binding oxidase (312 aa).

E68, E101, and H104 together coordinate Mn(2+). The 3-(O4'-tyrosyl)-valine (Val-Tyr) cross-link spans V71–Y162. E101 lines the Fe cation pocket. E167, E202, and H205 together coordinate Fe cation.

It belongs to the ribonucleoside diphosphate reductase small chain family. R2-like ligand binding oxidase subfamily. Homodimer. Fe cation serves as cofactor. Requires Mn(2+) as cofactor.

Functionally, probable oxidase that might be involved in lipid metabolism. The sequence is that of R2-like ligand binding oxidase from Mycolicibacterium gilvum (strain PYR-GCK) (Mycobacterium gilvum (strain PYR-GCK)).